A 475-amino-acid polypeptide reads, in one-letter code: 3-isopropylmalate dehydratase large subunit (475 aa).

[4Fe-4S] cluster-binding residues include Cys-352, Cys-413, and Cys-416.

The protein belongs to the aconitase/IPM isomerase family. LeuC type 1 subfamily. Heterodimer of LeuC and LeuD. Requires [4Fe-4S] cluster as cofactor.

It carries out the reaction (2R,3S)-3-isopropylmalate = (2S)-2-isopropylmalate. Its pathway is amino-acid biosynthesis; L-leucine biosynthesis; L-leucine from 3-methyl-2-oxobutanoate: step 2/4. Its function is as follows. Catalyzes the isomerization between 2-isopropylmalate and 3-isopropylmalate, via the formation of 2-isopropylmaleate. The polypeptide is 3-isopropylmalate dehydratase large subunit (Pseudomonas syringae pv. tomato (strain ATCC BAA-871 / DC3000)).